A 566-amino-acid polypeptide reads, in one-letter code: Peroxisomal leader peptide-processing protease (566 aa).

The tract at residues 319–531 (ALAALLPPEV…LQPALQQYSQ (213 aa)) is serine protease. Residues H372, D408, and S481 each act as charge relay system in the active site.

This sequence belongs to the peptidase S1B family. As to quaternary structure, homodimer. Forms a heterodimer with the C-terminal cleavage product (45 kDa form). Forms a heterodimer with the N-terminal cleavage product (15 kDa form). Interacts with PEX5. Interacts with LONP2. Post-translationally, self-cleavage gives rise to an N-terminal 15-kDa fragment and C-terminal 45-kDa fragment upon import into the peroxisomes. The full-lengh TYSND1 is the active the proteolytic processing of PTS1- and PTS2-proteins and in self-cleavage, and intermolecular self-cleavage of TYSND1 down-regulates its protease activity.

Its subcellular location is the peroxisome. Functionally, peroxisomal protease that mediates both the removal of the leader peptide from proteins containing a PTS2 target sequence and processes several PTS1-containing proteins. Catalyzes the processing of PTS1-proteins involved in the peroxisomal beta-oxidation of fatty acids. In Homo sapiens (Human), this protein is Peroxisomal leader peptide-processing protease (TYSND1).